The primary structure comprises 691 residues: Menaquinone reductase, molybdopterin-binding-like subunit (691 aa).

A signal peptide (tat-type signal) is located at residues 1 to 27 (MALDRRGFLKFIGGATAGILATPVVWK). The 4Fe-4S Mo/W bis-MGD-type domain maps to 50–106 (NSYVPTVSKLCPTGIGVRVRLVDGRPVRVIGNPEHPLSKGGVSSIAAAEVQMLYSPA).

Belongs to the prokaryotic molybdopterin-containing oxidoreductase family. The Qrc complex is composed of four subunits: QrcA, QrcB, QrcC and QrcD. Can form a supercomplex with the [NiFe] hydrogenase HynA1 and the tetraheme Type I cytochrome c3 TpIc(3), its physiological electron donors. There is no molybdenum or tungsten pterin cofactor present in the Qrc complex, despite the similarity of QrcB to molybdopterin-containing oxidoreductases. is required as a cofactor. In terms of processing, predicted to be exported by the Tat system. The position of the signal peptide cleavage has not been experimentally proven.

The protein localises to the periplasm. Its function is as follows. Component of the respiratory Qrc complex, that catalyzes the reduction of the menaquinone pool using electrons transferred from the reduced periplasmic cytochrome c3, and which is probably involved in sulfate respiration. Is likely essential for growth on H(2) or formate since the periplasmic hydrogenases and/or formate dehydrogenases act as primary electron donors for the Qrc complex. The function of the QrcB subunit is unknown; in the absence of a catalytic site, it may provide a structural scaffold for the other subunits. This is Menaquinone reductase, molybdopterin-binding-like subunit from Nitratidesulfovibrio vulgaris (strain ATCC 29579 / DSM 644 / CCUG 34227 / NCIMB 8303 / VKM B-1760 / Hildenborough) (Desulfovibrio vulgaris).